We begin with the raw amino-acid sequence, 2535 residues long: Piezo-type mechanosensitive ion channel component 1 (2535 aa).

The next 3 helical transmembrane spans lie at 13–25 (LLLP…ASLL), 29–44 (ALSL…LPWL), and 59–81 (LLRA…QICL). Asn100 carries N-linked (GlcNAc...) asparagine glycosylation. The next 5 helical transmembrane spans lie at 122–138 (VAPD…CLGL), 193–212 (LLVT…AGIA), 215–234 (SAFS…WWSC), 246–266 (LCVM…CYQT), and 308–328 (WPIY…TSLL). Residues 346 to 357 (DEEHELELDQLE) show a composition bias toward acidic residues. The interval 346–377 (DEEHELELDQLEPEPQARGTTQGATPTTTGPD) is disordered. Positions 358–376 (PEPQARGTTQGATPTTTGP) are enriched in low complexity. N-linked (GlcNAc...) asparagine glycosylation is present at Asn380. 8 helical membrane-spanning segments follow: residues 416 to 436 (LILD…SIMY), 439 to 454 (WLTF…IWTV), 460 to 482 (LAML…RYVW), 510 to 527 (CLDL…WLLL), 572 to 592 (IYVK…SFAG), 594 to 614 (LVVY…LFQV), 625 to 646 (VFWW…TFQF), and 677 to 693 (LFSS…ACIL). The residue at position 749 (Ser749) is a Phosphoserine. The next 12 membrane-spanning stretches (helical) occupy residues 803–814 (LVALYTVWVALK), 818–831 (VMNL…AFAL), 846–860 (VWTC…LYQL), 913–940 (GYIQ…HYRR), 981–996 (GLEI…IGQR), 999–1014 (FMVI…ILTR), 1028–1043 (CLFL…LLCL), 1083–1104 (TNLI…VFSA), 1140–1166 (YLDM…TGAT), 1172–1190 (GLGY…TTLL), 1204–1222 (LILY…SLLS), and 1272–1288 (IWDS…RRVF). The stretch at 1325 to 1356 (HRQTEERSLAQLKRQMKRIRAKQEKYRQSQAS) forms a coiled coil. Disordered regions lie at residues 1345–1383 (AKQE…RTQW) and 1556–1597 (SGPV…NTRS). A compositionally biased stretch (polar residues) spans 1352 to 1365 (QSQASRGQLQSTDP). Phosphoserine is present on residues Ser1372 and Ser1377. The segment covering 1579-1597 (SSMTDDTGSPLSTGYNTRS) has biased composition (polar residues). A phosphoserine mark is found at Ser1614, Ser1618, and Ser1633. The next 4 membrane-spanning stretches (helical) occupy residues 1644–1687 (PELE…LNHM), 1692–1707 (AASL…WAML), 1716–1734 (FWMT…KYLF), and 1767–1788 (DSYI…SQLL). 2 stretches are compositionally biased toward basic and acidic residues: residues 1801 to 1811 (PKDHCRSSEKD) and 1842 to 1867 (PKDH…DLKP). Residues 1801–1911 (PKDHCRSSEK…GREAAGRKRL (111 aa)) form a disordered region. Positions 1868–1881 (QHRRHISIRFRRRK) are enriched in basic residues. A run of 5 helical transmembrane segments spans residues 1965 to 1984 (YALM…FGFW), 2005 to 2021 (PQAF…TMVI), 2036 to 2056 (AFQV…LPAV), 2065 to 2080 (AVAQ…YFAL), and 2181 to 2201 (GLII…MSLI). A disulfide bridge links Cys2425 with Cys2429. A helical transmembrane segment spans residues 2446 to 2466 (LGFLAGYGIVGLYVSIVLVVG).

Belongs to the PIEZO (TC 1.A.75) family. As to quaternary structure, homotrimer; the homotrimer forms a propeller-shaped Piezo channel with a cation-ion conducting pore. Heterotrimeric interaction may occur between PIEZO1 and PIEZO2. Interacts with PKD2. Interacts with STOM13. Interacts with TMC1, TMC2, PCDH15 and CIB2; the interaction may be part of the MET complex. Interacts with MDFIC (via C-terminus); the interaction prolongs Piezo channel inactivation. Interacts with MDFI (via C-terminus); the interaction prolongs Piezo channel inactivation. In terms of tissue distribution, moderate expression in lung and kidney. Very weak expression in heart, spleen and liver.

It localises to the endoplasmic reticulum membrane. The protein localises to the endoplasmic reticulum-Golgi intermediate compartment membrane. It is found in the cell membrane. The protein resides in the cell projection. Its subcellular location is the lamellipodium membrane. The enzyme catalyses K(+)(in) = K(+)(out). It catalyses the reaction Na(+)(in) = Na(+)(out). The catalysed reaction is Ca(2+)(in) = Ca(2+)(out). It carries out the reaction Mg(2+)(in) = Mg(2+)(out). With respect to regulation, regulated by auxillary subunits MDFIC and MDFI. Down-regulated by phosphatidylserines exposed on the cell surface. Divalent ions decrease the single-channel permeability of K(+). Functionally, pore-forming subunit of the mechanosensitive non-specific cation Piezo channel required for rapidly adapting mechanically activated (MA) currents and has a key role in sensing touch and tactile pain. Piezo channels are homotrimeric three-blade propeller-shaped structures that utilize a cap-motion and plug-and-latch mechanism to gate their ion-conducting pathways. Generates currents characterized by a linear current-voltage relationship that are sensitive to ruthenium red and gadolinium. Conductance to monovalent alkali ions is highest for K(+), intermediate for Na(+) and lowest for Li(+). Divalent ions except for Mn(2+) permeate the channel but more slowly than the monovalent ions and they also reduce K(+) currents. Plays a key role in epithelial cell adhesion by maintaining integrin activation through R-Ras recruitment to the ER, most probably in its activated state, and subsequent stimulation of calpain signaling. In inner ear hair cells, PIEZO1/2 subunits may constitute part of the mechanotransducer (MET) non-selective cation channel complex where they may act as pore-forming ion-conducting component in the complex. In the kidney, may contribute to the detection of intraluminal pressure changes and to urine flow sensing. Acts as a shear-stress sensor that promotes endothelial cell organization and alignment in the direction of blood flow through calpain activation. Plays a key role in blood vessel formation and vascular structure in both development and adult physiology. Acts as a sensor of phosphatidylserine (PS) flipping at the plasma membrane and governs morphogenesis of muscle cells. In myoblasts, flippase-mediated PS enrichment at the inner leaflet of plasma membrane triggers channel activation and Ca(2+) influx followed by Rho GTPases signal transduction, leading to assembly of cortical actomyosin fibers and myotube formation. The polypeptide is Piezo-type mechanosensitive ion channel component 1 (Piezo1) (Rattus norvegicus (Rat)).